Consider the following 85-residue polypeptide: Antitoxin VapB31 (85 aa).

Antitoxin component of a type II toxin-antitoxin (TA) system. Upon expression in M.smegmatis neutralizes the effect of cognate toxin VapC31. The polypeptide is Antitoxin VapB31 (vapB31) (Mycobacterium tuberculosis (strain ATCC 25618 / H37Rv)).